A 269-amino-acid polypeptide reads, in one-letter code: Formamidopyrimidine-DNA glycosylase (269 aa).

Proline 2 (schiff-base intermediate with DNA) is an active-site residue. Glutamate 3 serves as the catalytic Proton donor. The active-site Proton donor; for beta-elimination activity is the lysine 57. DNA contacts are provided by histidine 90, arginine 109, and arginine 150. The FPG-type zinc finger occupies 235-269 (NVYGRAGQPCVQCDAILKADRHGQRSTAYCPQCQR). The active-site Proton donor; for delta-elimination activity is arginine 259.

Belongs to the FPG family. In terms of assembly, monomer. The cofactor is Zn(2+).

It carries out the reaction Hydrolysis of DNA containing ring-opened 7-methylguanine residues, releasing 2,6-diamino-4-hydroxy-5-(N-methyl)formamidopyrimidine.. The enzyme catalyses 2'-deoxyribonucleotide-(2'-deoxyribose 5'-phosphate)-2'-deoxyribonucleotide-DNA = a 3'-end 2'-deoxyribonucleotide-(2,3-dehydro-2,3-deoxyribose 5'-phosphate)-DNA + a 5'-end 5'-phospho-2'-deoxyribonucleoside-DNA + H(+). Involved in base excision repair of DNA damaged by oxidation or by mutagenic agents. Acts as a DNA glycosylase that recognizes and removes damaged bases. Has a preference for oxidized purines, such as 7,8-dihydro-8-oxoguanine (8-oxoG). Has AP (apurinic/apyrimidinic) lyase activity and introduces nicks in the DNA strand. Cleaves the DNA backbone by beta-delta elimination to generate a single-strand break at the site of the removed base with both 3'- and 5'-phosphates. This chain is Formamidopyrimidine-DNA glycosylase, found in Alcanivorax borkumensis (strain ATCC 700651 / DSM 11573 / NCIMB 13689 / SK2).